A 1324-amino-acid chain; its full sequence is Probable phosphoribosylformylglycinamidine synthase (1324 aa).

Residues 314–325, 394–396, and Ala681 contribute to the ATP site; these read GATTGTGGRIRD and SGF. Positions 682, 721, 725, and 894 each coordinate Mg(2+). Residue Ser896 participates in ATP binding. Positions 1053–1295 constitute a Glutamine amidotransferase type-1 domain; it reads RVAIIREEGS…LTWQWAESSE (243 aa). Cys1146 (nucleophile) is an active-site residue. Active-site residues include His1280 and Asp1282.

The protein in the N-terminal section; belongs to the FGAMS family.

The protein localises to the cytoplasm. It carries out the reaction N(2)-formyl-N(1)-(5-phospho-beta-D-ribosyl)glycinamide + L-glutamine + ATP + H2O = 2-formamido-N(1)-(5-O-phospho-beta-D-ribosyl)acetamidine + L-glutamate + ADP + phosphate + H(+). The protein operates within purine metabolism; IMP biosynthesis via de novo pathway; 5-amino-1-(5-phospho-D-ribosyl)imidazole from N(2)-formyl-N(1)-(5-phospho-D-ribosyl)glycinamide: step 1/2. Phosphoribosylformylglycinamidine synthase involved in the purines biosynthetic pathway. Catalyzes the ATP-dependent conversion of formylglycinamide ribonucleotide (FGAR) and glutamine to yield formylglycinamidine ribonucleotide (FGAM) and glutamate. This chain is Probable phosphoribosylformylglycinamidine synthase, found in Caenorhabditis elegans.